We begin with the raw amino-acid sequence, 257 residues long: 5'-nucleotidase SurE (257 aa).

4 residues coordinate a divalent metal cation: Asp15, Asp16, Ser46, and Asn99.

Belongs to the SurE nucleotidase family. Requires a divalent metal cation as cofactor.

It is found in the cytoplasm. It catalyses the reaction a ribonucleoside 5'-phosphate + H2O = a ribonucleoside + phosphate. Its function is as follows. Nucleotidase that shows phosphatase activity on nucleoside 5'-monophosphates. The chain is 5'-nucleotidase SurE from Aliivibrio fischeri (strain ATCC 700601 / ES114) (Vibrio fischeri).